The following is a 365-amino-acid chain: 3-dehydroquinate synthase (365 aa).

Residues 95-99 (GVVGD), 119-120 (TT), K132, and K141 each bind NAD(+). Residues E174, H238, and H255 each coordinate Zn(2+).

Belongs to the sugar phosphate cyclases superfamily. Dehydroquinate synthase family. It depends on Co(2+) as a cofactor. Zn(2+) is required as a cofactor. The cofactor is NAD(+).

Its subcellular location is the cytoplasm. It carries out the reaction 7-phospho-2-dehydro-3-deoxy-D-arabino-heptonate = 3-dehydroquinate + phosphate. It participates in metabolic intermediate biosynthesis; chorismate biosynthesis; chorismate from D-erythrose 4-phosphate and phosphoenolpyruvate: step 2/7. In terms of biological role, catalyzes the conversion of 3-deoxy-D-arabino-heptulosonate 7-phosphate (DAHP) to dehydroquinate (DHQ). The chain is 3-dehydroquinate synthase from Chlorobium chlorochromatii (strain CaD3).